Here is a 332-residue protein sequence, read N- to C-terminus: Adenosine deaminase (332 aa).

2 residues coordinate Zn(2+): His12 and His14. The substrate site is built by His14, Asp16, and Gly170. Zn(2+) is bound at residue His197. Residue Glu200 is the Proton donor of the active site. Position 278 (Asp278) interacts with Zn(2+).

The protein belongs to the metallo-dependent hydrolases superfamily. Adenosine and AMP deaminases family. Adenosine deaminase subfamily. The cofactor is Zn(2+).

The catalysed reaction is adenosine + H2O + H(+) = inosine + NH4(+). It catalyses the reaction 2'-deoxyadenosine + H2O + H(+) = 2'-deoxyinosine + NH4(+). Functionally, catalyzes the hydrolytic deamination of adenosine and 2-deoxyadenosine. The chain is Adenosine deaminase from Clostridium perfringens (strain ATCC 13124 / DSM 756 / JCM 1290 / NCIMB 6125 / NCTC 8237 / Type A).